Consider the following 594-residue polypeptide: Potassium-transporting ATPase potassium-binding subunit (594 aa).

Helical transmembrane passes span 3–23 (ADFL…APLL), 67–87 (AVAM…LQRL), 136–156 (ALTV…IALV), 179–199 (LYVL…QGVV), 287–307 (LEML…GEMV), 314–334 (VAIL…AAYF), 415–435 (GLYG…LMIG), 453–473 (VALV…VAVL), 519–539 (VLLG…ILAL), and 562–582 (LFVA…YVPA).

The protein belongs to the KdpA family. The system is composed of three essential subunits: KdpA, KdpB and KdpC.

The protein localises to the cell inner membrane. Its function is as follows. Part of the high-affinity ATP-driven potassium transport (or Kdp) system, which catalyzes the hydrolysis of ATP coupled with the electrogenic transport of potassium into the cytoplasm. This subunit binds the periplasmic potassium ions and delivers the ions to the membrane domain of KdpB through an intramembrane tunnel. This Bordetella pertussis (strain Tohama I / ATCC BAA-589 / NCTC 13251) protein is Potassium-transporting ATPase potassium-binding subunit.